The chain runs to 124 residues: Fluoride-specific ion channel FluC (124 aa).

Helical transmembrane passes span 3 to 23 (IIAI…LSIW), 34 to 54 (YGTL…LVLA), 66 to 86 (LLIV…SFET), and 100 to 120 (LYVL…AGVA). Positions 74 and 77 each coordinate Na(+).

It belongs to the fluoride channel Fluc/FEX (TC 1.A.43) family.

The protein localises to the cell membrane. The catalysed reaction is fluoride(in) = fluoride(out). Its activity is regulated as follows. Na(+) is not transported, but it plays an essential structural role and its presence is essential for fluoride channel function. In terms of biological role, fluoride-specific ion channel. Important for reducing fluoride concentration in the cell, thus reducing its toxicity. The chain is Fluoride-specific ion channel FluC from Roseiflexus sp. (strain RS-1).